A 348-amino-acid polypeptide reads, in one-letter code: SUMO-activating enzyme subunit 1 (348 aa).

The protein belongs to the ubiquitin-activating E1 family. In terms of assembly, heterodimer of sae1 and uba2/sae2. The heterodimer corresponds to the two domains that are encoded on a single polypeptide chain in ubiquitin-activating enzyme E1. Interacts with ube2i.

It localises to the nucleus. The protein operates within protein modification; protein sumoylation. Its function is as follows. The heterodimer acts as an E1 ligase for sumo1, sumo2, and sumo3. It mediates ATP-dependent activation of sumo proteins followed by formation of a thioester bond between a sumo protein and a conserved active site cysteine residue on uba2/sae2. This is SUMO-activating enzyme subunit 1 (sae1) from Danio rerio (Zebrafish).